The sequence spans 252 residues: 5-oxoprolinase subunit A (252 aa).

The protein belongs to the LamB/PxpA family. Forms a complex composed of PxpA, PxpB and PxpC.

It catalyses the reaction 5-oxo-L-proline + ATP + 2 H2O = L-glutamate + ADP + phosphate + H(+). Functionally, catalyzes the cleavage of 5-oxoproline to form L-glutamate coupled to the hydrolysis of ATP to ADP and inorganic phosphate. The chain is 5-oxoprolinase subunit A from Photorhabdus laumondii subsp. laumondii (strain DSM 15139 / CIP 105565 / TT01) (Photorhabdus luminescens subsp. laumondii).